A 663-amino-acid chain; its full sequence is UvrABC system protein B (663 aa).

The 241-residue stretch at 31–271 (DNIESGEKAQ…EQSISKIQAE (241 aa)) folds into the Helicase ATP-binding domain. 44–51 (GATGTGKT) contacts ATP. A Beta-hairpin motif is present at residues 97–120 (YYDYYQPEAYVPSSDTYIEKDSSV). The Helicase C-terminal domain maps to 435–601 (QMDDLLGEIN…TIKKDIRDLI (167 aa)). The UVR domain maps to 627 to 662 (QEAIKQLQKNMQEAAELLDFELAAQLRDLILELKAI).

This sequence belongs to the UvrB family. Forms a heterotetramer with UvrA during the search for lesions. Interacts with UvrC in an incision complex.

The protein resides in the cytoplasm. In terms of biological role, the UvrABC repair system catalyzes the recognition and processing of DNA lesions. A damage recognition complex composed of 2 UvrA and 2 UvrB subunits scans DNA for abnormalities. Upon binding of the UvrA(2)B(2) complex to a putative damaged site, the DNA wraps around one UvrB monomer. DNA wrap is dependent on ATP binding by UvrB and probably causes local melting of the DNA helix, facilitating insertion of UvrB beta-hairpin between the DNA strands. Then UvrB probes one DNA strand for the presence of a lesion. If a lesion is found the UvrA subunits dissociate and the UvrB-DNA preincision complex is formed. This complex is subsequently bound by UvrC and the second UvrB is released. If no lesion is found, the DNA wraps around the other UvrB subunit that will check the other stand for damage. This Streptococcus equi subsp. zooepidemicus (strain MGCS10565) protein is UvrABC system protein B.